The primary structure comprises 625 residues: Folylpolyglutamate synthase (625 aa).

Residue 141–144 participates in ATP binding; that stretch reads GKGS. Mg(2+)-binding residues include S165, E234, and H262. Residues R384 and D414 each coordinate ATP.

The protein belongs to the folylpolyglutamate synthase family. A monovalent cation is required as a cofactor.

Its subcellular location is the mitochondrion inner membrane. The protein resides in the mitochondrion matrix. The enzyme catalyses (6S)-5,6,7,8-tetrahydrofolyl-(gamma-L-Glu)(n) + L-glutamate + ATP = (6S)-5,6,7,8-tetrahydrofolyl-(gamma-L-Glu)(n+1) + ADP + phosphate + H(+). The protein operates within cofactor biosynthesis; tetrahydrofolylpolyglutamate biosynthesis. Functionally, catalyzes conversion of folates to polyglutamate derivatives allowing concentration of folate compounds in the cell and the intracellular retention of these cofactors, which are important substrates for most of the folate-dependent enzymes that are involved in one-carbon transfer reactions involved in purine, pyrimidine and amino acid synthesis. Essential for organellar and whole-plant folate homeostasis. The polypeptide is Folylpolyglutamate synthase (Arabidopsis thaliana (Mouse-ear cress)).